A 181-amino-acid polypeptide reads, in one-letter code: UPF0398 protein LMHCC_0668 (181 aa).

The protein belongs to the UPF0398 family.

This is UPF0398 protein LMHCC_0668 from Listeria monocytogenes serotype 4a (strain HCC23).